The primary structure comprises 267 residues: DCN1-like protein 2 (267 aa).

The tract at residues 1 to 48 (MTRKYTKKSSGSTASTTNSTAEIVDLTTSTSSVGKKRKSPDEKAQPIT) is disordered. The segment covering 8-21 (KSSGSTASTTNSTA) has biased composition (low complexity). Residues 75 to 262 (HYTYLYTYIF…LLDQFSEWVQ (188 aa)) enclose the DCUN1 domain.

The sequence is that of DCN1-like protein 2 from Dictyostelium discoideum (Social amoeba).